Consider the following 333-residue polypeptide: Casein kinase II subunit alpha-3 (333 aa).

The Protein kinase domain occupies 34–319 (YEVVRKVGRG…AREAMDHPYF (286 aa)). Residues 40–48 (VGRGKYSEV) and Lys63 contribute to the ATP site. The active-site Proton acceptor is Asp151.

Belongs to the protein kinase superfamily. Ser/Thr protein kinase family. CK2 subfamily. Heterotetramer of two catalytic alpha subunits and two regulatory beta subunits.

The protein localises to the nucleus. It is found in the nucleolus. Its subcellular location is the cytoplasm. The catalysed reaction is L-seryl-[protein] + ATP = O-phospho-L-seryl-[protein] + ADP + H(+). It catalyses the reaction L-threonyl-[protein] + ATP = O-phospho-L-threonyl-[protein] + ADP + H(+). In terms of biological role, casein kinases are operationally defined by their preferential utilization of acidic proteins such as caseins as substrates. The alpha chain contains the catalytic site. The tetrameric holoenzyme CK2 is composed of two alpha and two beta subunits. Acts as a circadian clock component that maintains the correct period length through phosphorylation of CCA1. The protein is Casein kinase II subunit alpha-3 of Arabidopsis thaliana (Mouse-ear cress).